A 323-amino-acid chain; its full sequence is tRNA U34 carboxymethyltransferase (323 aa).

Residues Lys-91, Trp-105, Lys-110, Gly-130, 152–154 (DPT), 181–182 (IE), Met-196, Tyr-200, and Arg-315 contribute to the carboxy-S-adenosyl-L-methionine site.

The protein belongs to the class I-like SAM-binding methyltransferase superfamily. CmoB family. In terms of assembly, homotetramer.

It carries out the reaction carboxy-S-adenosyl-L-methionine + 5-hydroxyuridine(34) in tRNA = 5-carboxymethoxyuridine(34) in tRNA + S-adenosyl-L-homocysteine + H(+). Catalyzes carboxymethyl transfer from carboxy-S-adenosyl-L-methionine (Cx-SAM) to 5-hydroxyuridine (ho5U) to form 5-carboxymethoxyuridine (cmo5U) at position 34 in tRNAs. The sequence is that of tRNA U34 carboxymethyltransferase from Salmonella agona (strain SL483).